Here is a 214-residue protein sequence, read N- to C-terminus: Soluble inorganic pyrophosphatase (214 aa).

Substrate-binding residues include K64, R78, and Y90. Residues D100, D105, and D137 each contribute to the Mg(2+) site. A substrate-binding site is contributed by Y174.

This sequence belongs to the PPase family. Mg(2+) serves as cofactor.

The protein resides in the cytoplasm. It catalyses the reaction diphosphate + H2O = 2 phosphate + H(+). The sequence is that of Soluble inorganic pyrophosphatase (IPP) from Oryza sativa subsp. indica (Rice).